Here is a 394-residue protein sequence, read N- to C-terminus: Probable cytosolic iron-sulfur protein assembly protein 1 (394 aa).

WD repeat units lie at residues 10–49 (AHND…NFPL), 56–108 (AHKR…EQDS), 144–184 (GHEN…EEFE), 191–230 (DHQH…DDWS), 237–284 (GHGG…TEQI), 313–352 (IHKY…KWEI), and 359–394 (AHGV…IWEP).

The protein belongs to the WD repeat CIA1 family. As to quaternary structure, interacts with NAR1.

Its subcellular location is the cytoplasm. It is found in the nucleus. Essential component of the cytosolic iron-sulfur (Fe/S) protein assembly machinery. Required for the maturation of extramitochondrial Fe/S proteins. The protein is Probable cytosolic iron-sulfur protein assembly protein 1 of Debaryomyces hansenii (strain ATCC 36239 / CBS 767 / BCRC 21394 / JCM 1990 / NBRC 0083 / IGC 2968) (Yeast).